The sequence spans 447 residues: NAC domain containing protein 50 (447 aa).

The disordered stretch occupies residues 1–21; sequence MGRESLAVVSSPPSATAPSTA. The NAC domain occupies 27-178; it reads LAPGFRFHPT…AYVLCRVFHK (152 aa). Residues 126–184 mediate DNA binding; that stretch reads LGMKKTLVFHSGRAPDGLRTNWVMHEYRLVEYETETNGSLLQDAYVLCRVFHKNNIGPP. 2 disordered regions span residues 246–303 and 371–392; these read DATP…NKEA and KENQ…EEKV. Basic and acidic residues predominate over residues 281–293; the sequence is TLKREHAEEDERP. Positions 392–447 form a coiled coil; it reads VNDLQKEVHQMSVERETFKLEMMSAEAMISILQSRIDALRQENEELKKKNASGQAS.

In terms of assembly, interacts with JMJ14 and NAC052. Mostly expressed in floral organs, and, at low levels, in other organs.

Its subcellular location is the nucleus. Transcriptional repressor that binds to the motif 5'-(C/T)A(C/A)G-3' in the promoter of target genes. Also binds to the 5'-CTTGNNNNNCAAG-3' consensus sequence in chromatin. Can bind to the mitochondrial dysfunction motif (MDM) present in the upstream regions of mitochondrial dysfunction stimulon (MDS) genes involved in mitochondrial retrograde regulation (MRR). Together with NAC051/NAC052 and JMJ14, regulates gene expression and flowering time by associating with the histone demethylase JMJ14, probably by the promotion of RNA-mediated gene silencing. In Arabidopsis thaliana (Mouse-ear cress), this protein is NAC domain containing protein 50.